The primary structure comprises 145 residues: Transcription antitermination protein NusB (145 aa).

Belongs to the NusB family.

Its function is as follows. Involved in transcription antitermination. Required for transcription of ribosomal RNA (rRNA) genes. Binds specifically to the boxA antiterminator sequence of the ribosomal RNA (rrn) operons. This is Transcription antitermination protein NusB from Geotalea uraniireducens (strain Rf4) (Geobacter uraniireducens).